A 523-amino-acid polypeptide reads, in one-letter code: Sensory neuron membrane protein 1 (523 aa).

Over 1–11 the chain is Cytoplasmic; it reads MQLPRELKYAA. A helical membrane pass occupies residues 12–32; the sequence is IAGGVALFGLIFGWVLFPTIL. Residues 33–458 are Extracellular-facing; the sequence is KSQLKKEMAL…HQLFIPKRVV (426 aa). 2 N-linked (GlcNAc...) asparagine glycosylation sites follow: asparagine 67 and asparagine 229. Cystine bridges form between cysteine 268/cysteine 333, cysteine 297/cysteine 352, and cysteine 335/cysteine 341. Asparagine 440 is a glycosylation site (N-linked (GlcNAc...) asparagine). The chain crosses the membrane as a helical span at residues 459–479; sequence GVLRWWMVSFGSLGAVIGIVF. At 480–523 the chain is on the cytoplasmic side; that stretch reads HFRDHIMRLAVSGDTKVSKVTPEEEEQKDISVIGQAQEPAKVNI.

Belongs to the CD36 family.

It localises to the cell membrane. Plays an olfactory role that is not restricted to pheromone sensitivity. This is Sensory neuron membrane protein 1 from Helicoverpa armigera (Cotton bollworm).